Consider the following 205-residue polypeptide: Outer-membrane lipoprotein LolB (205 aa).

Residues 1 to 17 (MFLRHCITFTMIALLAG) form the signal peptide. The N-palmitoyl cysteine moiety is linked to residue C18. C18 carries S-diacylglycerol cysteine lipidation.

This sequence belongs to the LolB family. In terms of assembly, monomer.

The protein localises to the cell outer membrane. In terms of biological role, plays a critical role in the incorporation of lipoproteins in the outer membrane after they are released by the LolA protein. This chain is Outer-membrane lipoprotein LolB, found in Pseudomonas putida (strain ATCC 700007 / DSM 6899 / JCM 31910 / BCRC 17059 / LMG 24140 / F1).